The following is a 97-amino-acid chain: Type VII secretion system extracellular protein A (97 aa).

Residues 61-93 are a coiled coil; it reads KVEKFAQLLEEIKQQLNSTADAVQEQDQQLSNN.

Belongs to the WXG100 family. sagEsxA-like subfamily. As to quaternary structure, forms both homodimers and heterodimers with EsxC.

It is found in the secreted. In terms of biological role, virulence factor that is important for the establishment of infection in the host. EsxA is required for EsxB synthesis as well as secretion. Modulates host cell apoptotic pathways and mediates together with EsxB the release of S.aureus from the host cell. By acting on apoptosis, plays a role in the modulation of dendritic cell-mediated immunity. The sequence is that of Type VII secretion system extracellular protein A from Staphylococcus aureus (strain USA300).